Consider the following 226-residue polypeptide: Uracil-DNA glycosylase (226 aa).

The Proton acceptor role is filled by D64.

Belongs to the uracil-DNA glycosylase (UDG) superfamily. UNG family.

It localises to the cytoplasm. It carries out the reaction Hydrolyzes single-stranded DNA or mismatched double-stranded DNA and polynucleotides, releasing free uracil.. In terms of biological role, excises uracil residues from the DNA which can arise as a result of misincorporation of dUMP residues by DNA polymerase or due to deamination of cytosine. This is Uracil-DNA glycosylase from Fusobacterium nucleatum subsp. nucleatum (strain ATCC 25586 / DSM 15643 / BCRC 10681 / CIP 101130 / JCM 8532 / KCTC 2640 / LMG 13131 / VPI 4355).